Consider the following 465-residue polypeptide: Phosphatidate cytidylyltransferase (465 aa).

Positions 1 to 60 are disordered; the sequence is MSDQPPAENADVRQRRAPESPVTERLRAPARDDARPTSDESDMEGILQDEDSDAGSKNKE. Positions 10–38 are enriched in basic and acidic residues; it reads ADVRQRRAPESPVTERLRAPARDDARPTS. Over residues 39–53 the composition is skewed to acidic residues; that stretch reads DESDMEGILQDEDSD. 8 helical membrane passes run 95-117, 121-143, 158-178, 187-207, 214-234, 239-259, 288-308, and 367-387; these read WVVR…TRGA, MFLV…LAVY, FLLT…WGIV, FLVA…FVSF, GYYM…LLIV, FIIQ…AMII, GFIG…LALY, and IALS…ASGF.

The protein belongs to the CDS family.

It localises to the membrane. It carries out the reaction a 1,2-diacyl-sn-glycero-3-phosphate + CTP + H(+) = a CDP-1,2-diacyl-sn-glycerol + diphosphate. Its pathway is phospholipid metabolism; CDP-diacylglycerol biosynthesis; CDP-diacylglycerol from sn-glycerol 3-phosphate: step 3/3. Provides CDP-diacylglycerol, an important precursor for the synthesis of phosphatidylinositol (PtdIns). The protein is Phosphatidate cytidylyltransferase (cdgs-1) of Caenorhabditis elegans.